A 701-amino-acid polypeptide reads, in one-letter code: Elongation factor G (701 aa).

The 280-residue stretch at 6–285 (HKVRNIGIMA…AVVAYLPNPL (280 aa)) folds into the tr-type G domain. Residues 15–22 (AHIDAGKT), 79–83 (DNPGH), and 133–136 (NKMD) contribute to the GTP site.

This sequence belongs to the TRAFAC class translation factor GTPase superfamily. Classic translation factor GTPase family. EF-G/EF-2 subfamily.

Its subcellular location is the cytoplasm. Catalyzes the GTP-dependent ribosomal translocation step during translation elongation. During this step, the ribosome changes from the pre-translocational (PRE) to the post-translocational (POST) state as the newly formed A-site-bound peptidyl-tRNA and P-site-bound deacylated tRNA move to the P and E sites, respectively. Catalyzes the coordinated movement of the two tRNA molecules, the mRNA and conformational changes in the ribosome. This chain is Elongation factor G (fusA), found in Micrococcus luteus (Micrococcus lysodeikticus).